Reading from the N-terminus, the 1397-residue chain is ABC transporter B family member 2 (1397 aa).

Residues 1 to 117 (MSDKSNDGGE…KLDEGEKKEG (117 aa)) form a disordered region. Over residues 24–39 (IDDENNNDINNQDDNE) the composition is skewed to acidic residues. A coiled-coil region spans residues 37–69 (DNENNNNNNNNKNSDDNEENLKDYKNKKEDFGN). 2 stretches are compositionally biased toward basic and acidic residues: residues 49 to 79 (NSDDNEENLKDYKNKKEDFGNIKMDTIDDRP) and 107 to 117 (KKLDEGEKKEG). The next 5 helical transmembrane spans lie at 137-157 (ILLMIIGTIGALANGVSMPAI), 191-211 (FIYIGCGVFVCSYVEVAFWML), 273-293 (FICGFIVGFVNGWQLTLVIFA), 369-389 (GIGIGLVFLVLFGTYSLSFWY), and 407-427 (WQGGDVLTVFFSVIMGAMALG). The ABC transmembrane type-1 1 domain maps to 140–438 (MIIGTIGALA…ASPNVASFAN (299 aa)). Positions 474-710 (IEYRNIGFSY…NGVYTQLVNR (237 aa)) constitute an ABC transporter 1 domain. 509-516 (GDSGGGKS) provides a ligand contact to ATP. Disordered regions lie at residues 710–744 (RQQKGGDDGDKKKKKKSKESSKDESNNNIGPSSIS) and 763–783 (GLVNDNDNKKKKKKEKKPQEK). Over residues 735–744 (NNNIGPSSIS) the composition is skewed to low complexity. 6 helical membrane-spanning segments follow: residues 801 to 821 (FLIGLVGATLNGAIMPVFSII), 846 to 866 (LWFILLAVVAALANFIQIYCF), 922 to 942 (LGLLIQNIVTIVAGLVIAFVS), 948 to 968 (LVVLACVPVIGFAGKVEMDFF), 1028 to 1048 (GLSFGFSQCTLFFIYTLTYWY), and 1101 to 1121 (VFFAIIMSAMGVGQSMAFMPD). The ABC transmembrane type-1 2 domain maps to 801 to 1124 (FLIGLVGATL…SMAFMPDLGK (324 aa)). The region spanning 1159 to 1395 (IEFKDIKFSY…NGFYAELVSR (237 aa)) is the ABC transporter 2 domain. ATP is bound at residue 1194–1201 (GNSGGGKS).

This sequence belongs to the ABC transporter superfamily. ABCB family. Multidrug resistance exporter (TC 3.A.1.201) subfamily.

The protein resides in the membrane. This is ABC transporter B family member 2 (abcB2) from Dictyostelium discoideum (Social amoeba).